Here is a 472-residue protein sequence, read N- to C-terminus: Carboxypeptidase Q (472 aa).

A signal peptide spans 1 to 20; that stretch reads MRFLFFLFVAVVHLFSLGSG. Residues 21–44 constitute a propeptide that is removed on maturation; sequence KAIYKSGVSQRTFQEIKEEIANYE. A glycan (N-linked (GlcNAc...) asparagine) is linked at Asn-61. 2 residues coordinate Zn(2+): His-290 and Asp-302. Residue Glu-336 is the Nucleophile of the active site. Glu-337 lines the Zn(2+) pocket. The N-linked (GlcNAc...) asparagine glycan is linked to Asn-353. Residue Asp-364 participates in Zn(2+) binding. An N-linked (GlcNAc...) asparagine glycan is attached at Asn-396. His-434 contributes to the Zn(2+) binding site.

The protein belongs to the peptidase M28 family. In terms of assembly, homodimer. The monomeric form is inactive while the homodimer is active. Post-translationally, N-glycosylated. The secreted form is modified by hybrid or complex type oligosaccharide chains.

Its subcellular location is the endoplasmic reticulum. The protein resides in the golgi apparatus. It is found in the lysosome. The protein localises to the secreted. Functionally, carboxypeptidase that may play an important role in the hydrolysis of circulating peptides. Catalyzes the hydrolysis of dipeptides with unsubstituted terminals into amino acids. May play a role in the liberation of thyroxine hormone from its thyroglobulin (Tg) precursor. In Rattus norvegicus (Rat), this protein is Carboxypeptidase Q (Cpq).